The primary structure comprises 201 residues: Large ribosomal subunit protein uL4 (201 aa).

Residues 45-72 (AQKTRAEVTGSGKKPWRQKGTGRARAGS) are disordered.

Belongs to the universal ribosomal protein uL4 family. Part of the 50S ribosomal subunit.

In terms of biological role, one of the primary rRNA binding proteins, this protein initially binds near the 5'-end of the 23S rRNA. It is important during the early stages of 50S assembly. It makes multiple contacts with different domains of the 23S rRNA in the assembled 50S subunit and ribosome. Its function is as follows. Forms part of the polypeptide exit tunnel. This chain is Large ribosomal subunit protein uL4, found in Shewanella baltica (strain OS223).